The primary structure comprises 37 residues: Mu-agatoxin-Aa1f (37 aa).

4 cysteine pairs are disulfide-bonded: cysteine 2/cysteine 18, cysteine 9/cysteine 23, cysteine 17/cysteine 33, and cysteine 25/cysteine 31. At asparagine 37 the chain carries Asparagine amide.

This sequence belongs to the neurotoxin 07 (Beta/delta-agtx) family. 03 (aga-4) subfamily. Aga sub-subfamily. Expressed by the venom gland.

The protein localises to the secreted. Functionally, insecticidal neurotoxin that induces an irreversible spastic paralysis when injected into insects. Modifies presynaptic voltage-gated sodium channels (Nav), causing them to open at the normal resting potential of the nerve. This leads to spontaneous release of neurotransmitter and repetitive action potentials in motor neurons. The sequence is that of Mu-agatoxin-Aa1f from Agelenopsis aperta (North American funnel-web spider).